A 503-amino-acid chain; its full sequence is MVSIRPDEISSIIRQQIESYDQQVQVSNVGTVLQVGDGTARIYGLQQAMAQELLEFEDGTIGIALNLEEDNVGAVLMGSGYGIQEGSTVKATGRIAQVPVGEALVSRIVDALGRPIDGKGPINTNETRLLESPAPGIVARKSVCEPMQTGITAIDAMIPVGRGQRELIIGDRKTGKTAIAIDTIINQKGEDVICVYVAIGQKASTVAQVVDTLTEKGAMDYTVVVSASANDPATLQYLAPYTGATIAEYFMYKGKATLVIYDDLSKQAQAYRQISLLMRRPPGREAYPGDVFYLHSRLLERAAKLNDQLGGGSMTALPIIETQAGDVSAYIPTNVISITDGQIFLSSDLFNAGFRPAINAGISVSRVGSAAQTKAMKQVAGKLKLELAQFAELEAFSQFASDLDAATQAQLARGQRLREVLKQPQNSPLAVWEQVAIVYAGLNGYLDDIPPAQVTTFTQGLRDYLRNSKPKFPEIVGNEKKLTDEAESLLKEAIGEFKQGFTA.

170-177 (GDRKTGKT) contributes to the ATP binding site.

Belongs to the ATPase alpha/beta chains family. F-type ATPases have 2 components, CF(1) - the catalytic core - and CF(0) - the membrane proton channel. CF(1) has five subunits: alpha(3), beta(3), gamma(1), delta(1), epsilon(1). CF(0) has four main subunits: a, b, b' and c.

It localises to the cellular thylakoid membrane. It catalyses the reaction ATP + H2O + 4 H(+)(in) = ADP + phosphate + 5 H(+)(out). Its function is as follows. Produces ATP from ADP in the presence of a proton gradient across the membrane. The alpha chain is a regulatory subunit. This is ATP synthase subunit alpha from Gloeothece citriformis (strain PCC 7424) (Cyanothece sp. (strain PCC 7424)).